The sequence spans 212 residues: Methylthioribulose-1-phosphate dehydratase (212 aa).

Zn(2+) contacts are provided by His97 and His99.

It belongs to the aldolase class II family. MtnB subfamily. Homotetramer. Requires Zn(2+) as cofactor.

It carries out the reaction 5-(methylsulfanyl)-D-ribulose 1-phosphate = 5-methylsulfanyl-2,3-dioxopentyl phosphate + H2O. The protein operates within amino-acid biosynthesis; L-methionine biosynthesis via salvage pathway; L-methionine from S-methyl-5-thio-alpha-D-ribose 1-phosphate: step 2/6. Catalyzes the dehydration of methylthioribulose-1-phosphate (MTRu-1-P) into 2,3-diketo-5-methylthiopentyl-1-phosphate (DK-MTP-1-P). The sequence is that of Methylthioribulose-1-phosphate dehydratase from Bacillus cytotoxicus (strain DSM 22905 / CIP 110041 / 391-98 / NVH 391-98).